The sequence spans 363 residues: Type-2 angiotensin II receptor (363 aa).

The Extracellular segment spans residues 1–45 (MKDNFSFAATSRNITSSLPFVNLNMSGTNDLIFNCSHKPSDKHLE). N-linked (GlcNAc...) asparagine glycans are attached at residues Asn-4, Asn-13, Asn-24, and Asn-34. 2 disulfides stabilise this stretch: Cys-35-Cys-290 and Cys-117-Cys-195. The helical transmembrane segment at 46–70 (AIPVLYYLIFVIGFAVNIIVVSLFC) threads the bilayer. The Cytoplasmic portion of the chain corresponds to 71–80 (CQKGPKKVSS). A helical membrane pass occupies residues 81–104 (IYIFNLAVADLLLLATLPLWATYY). Angiotensin II-binding residues include Tyr-103 and Tyr-104. The Extracellular portion of the chain corresponds to 105–114 (SYRYDWLFGP). A helical membrane pass occupies residues 115–140 (VMCKVFGSFLTLNMFASIFFITCMSV). Residues 141 to 159 (DRYQSVIYPFLSQRRNPWQ) are Cytoplasmic-facing. Residues 160-181 (ASYVVPLVWCMACLSSLPTFYF) traverse the membrane as a helical segment. Angiotensin II is bound by residues Arg-182, Tyr-204, and Lys-215. The Extracellular segment spans residues 182 to 206 (RDVRTIEYLGVNACVMAFPPEKYAQ). A helical membrane pass occupies residues 207 to 232 (WSAGIALMKNVLGFIIPLIFIATCYF). Residues 233–257 (GIRKHLLKTNSYGKNRITRDQVLKM) are Cytoplasmic-facing. Residues 258-281 (AAAVVLAFIICWLPFHVLTFLDAL) traverse the membrane as a helical segment. Asp-279 is an angiotensin II binding site. The Extracellular segment spans residues 282–294 (SWMGIINSCEVMA). Residues 295-320 (VIDLALPFAILLGFTNSCVNPFLYCF) form a helical membrane-spanning segment. Angiotensin II is bound at residue Asp-297. Residues 321–363 (VGNRFQQKLRSMFRVPITWLQGKRETMSCRKSSSLREMDTFVS) lie on the Cytoplasmic side of the membrane. The segment at 324-333 (RFQQKLRSMF) is helix VIII. Phosphoserine; by PKC is present on Ser-354.

It belongs to the G-protein coupled receptor 1 family. As to quaternary structure, interacts with MTUS1.

Its subcellular location is the cell membrane. In terms of biological role, receptor for angiotensin II, a vasoconstricting peptide. Signals primarily via a non-canonical G-protein- and beta-arrestin independent pathways. Cooperates with MTUS1 to inhibit ERK2 activation and cell proliferation. The protein is Type-2 angiotensin II receptor (AGTR2) of Meriones unguiculatus (Mongolian jird).